A 149-amino-acid chain; its full sequence is uncharacterized protein (149 aa).

Residues 124-144 (IIIIALIIILANYAPSIIGKI) traverse the membrane as a helical segment.

The protein belongs to the M.jannaschii MJ0023/MJ0349/MJ1072/MJ1074/MJ1107/MJECL16 family.

The protein localises to the membrane. This is an uncharacterized protein from Methanocaldococcus jannaschii (strain ATCC 43067 / DSM 2661 / JAL-1 / JCM 10045 / NBRC 100440) (Methanococcus jannaschii).